Consider the following 60-residue polypeptide: Cytotoxin 2 (60 aa).

Disulfide bonds link Cys-3/Cys-21, Cys-14/Cys-38, Cys-42/Cys-53, and Cys-54/Cys-59.

It belongs to the three-finger toxin family. Short-chain subfamily. Type IA cytotoxin sub-subfamily. Monomer in solution; Homodimer and oligomer in the presence of negatively charged lipids forming a pore with a size ranging between 20 and 30 Angstroms. In terms of tissue distribution, expressed by the venom gland.

The protein resides in the secreted. It is found in the target cell membrane. Functionally, shows cytolytic activity on many different cells by forming pore in lipid membranes. In vivo, increases heart rate or kills the animal by cardiac arrest. In addition, it binds to heparin with high affinity, interacts with Kv channel-interacting protein 1 (KCNIP1) in a calcium-independent manner, and binds to integrin alpha-V/beta-3 (ITGAV/ITGB3) with moderate affinity. The polypeptide is Cytotoxin 2 (Naja mossambica (Mozambique spitting cobra)).